The following is a 512-amino-acid chain: Centrosomal protein CCDC61 (512 aa).

Methionine 1 is subject to N-acetylmethionine. The head domain stretch occupies residues 1 to 142 (MEQPAGLQVD…PLPLPYQGKP (142 aa)). Coiled coils occupy residues 176–203 (WHLR…REEA) and 246–273 (RRLA…NCEL). At threonine 282 the chain carries Phosphothreonine. Disordered stretches follow at residues 282–415 (TLPA…SFRS) and 430–472 (SQSV…HLAS). Residues 287 to 300 (AREDRALSSRERST) show a composition bias toward basic and acidic residues. Serine 328, serine 330, serine 372, and serine 375 each carry phosphoserine. The segment covering 406–415 (RSSSVDSFRS) has biased composition (low complexity). 2 positions are modified to phosphoserine: serine 447 and serine 473.

The protein belongs to the CCDC61 family. In terms of assembly, forms homodimers (via head domain). Interacts with CEP170. Interacts with PCM1 and CEP131. Binds tubulin.

It is found in the cytoplasm. Its subcellular location is the cytoskeleton. The protein localises to the microtubule organizing center. It localises to the centrosome. The protein resides in the centriolar satellite. It is found in the cilium basal body. Functionally, microtubule-binding centrosomal protein required for centriole cohesion, independently of the centrosome-associated protein/CEP250 and rootletin/CROCC linker. In interphase, required for anchoring microtubule at the mother centriole subdistal appendages and for centrosome positioning. During mitosis, may be involved in spindle assembly and chromatin alignment by regulating the organization of spindle microtubules into a symmetrical structure. Plays a non-essential role in ciliogenesis. The chain is Centrosomal protein CCDC61 from Rattus norvegicus (Rat).